The following is a 255-amino-acid chain: Aquaporin TIP4-1 (255 aa).

The next 2 helical transmembrane spans lie at 25–45 (AVLAELVLTFLFVFTGVSAAM) and 61–81 (TLAAVAIAHALAAGVLVTAGF). Positions 89-91 (NPA) match the NPA 1 motif. A run of 3 helical transmembrane segments spans residues 108–128 (VLYVAAQLLASSAACVLLRFL), 148–168 (GLVMEVILTFSLLFVTYAMIL), and 176–196 (AIGPLLTGLIVGANSLAGGNF). Residues 202 to 204 (NPA) carry the NPA 2 motif. A helical transmembrane segment spans residues 223-243 (WIGPLLGGPLAGFVYESLFLV).

The protein belongs to the MIP/aquaporin (TC 1.A.8) family. TIP (TC 1.A.8.10) subfamily.

The protein localises to the vacuole membrane. In terms of biological role, aquaporins facilitate the transport of water and small neutral solutes across cell membranes. This is Aquaporin TIP4-1 (TIP4-1) from Zea mays (Maize).